The chain runs to 386 residues: ATP phosphoribosyltransferase regulatory subunit (386 aa).

It belongs to the class-II aminoacyl-tRNA synthetase family. HisZ subfamily. Heteromultimer composed of HisG and HisZ subunits.

It is found in the cytoplasm. It participates in amino-acid biosynthesis; L-histidine biosynthesis; L-histidine from 5-phospho-alpha-D-ribose 1-diphosphate: step 1/9. Its function is as follows. Required for the first step of histidine biosynthesis. May allow the feedback regulation of ATP phosphoribosyltransferase activity by histidine. The chain is ATP phosphoribosyltransferase regulatory subunit from Ralstonia nicotianae (strain ATCC BAA-1114 / GMI1000) (Ralstonia solanacearum).